The following is a 378-amino-acid chain: GDP-mannose 3,5-epimerase 1 (378 aa).

NAD(+)-binding positions include 36-62, Asp-60, and Asp-80; that span reads GAGG…SDWK. Substrate-binding positions include Gly-105 and 145–147; that span reads SAC. 2 residues coordinate NAD(+): Tyr-175 and Lys-179. Residue Tyr-175 is the Proton acceptor of the active site. Substrate-binding positions include Asn-204, 217–219, Lys-226, 242–244, Arg-307, and Ser-357; these read EKA and QTR.

Belongs to the NAD(P)-dependent epimerase/dehydratase family. As to quaternary structure, homodimer. NAD(+) serves as cofactor.

The enzyme catalyses GDP-alpha-D-mannose = GDP-beta-L-gulose. It carries out the reaction GDP-beta-L-gulose = GDP-beta-L-galactose. Its pathway is cofactor biosynthesis; L-ascorbate biosynthesis via GDP-alpha-D-mannose pathway; L-ascorbate from GDP-alpha-D-mannose: step 1/5. Its activity is regulated as follows. Strongly activated by NAD. Activated by NADP. Slightly activated by NADH and NADPH. Inhibited by GDP. Functionally, catalyzes a reversible epimerization of GDP-D-mannose that precedes the committed step in the biosynthesis of vitamin C (L-ascorbate), resulting in the hydrolysis of the highly energetic glycosyl-pyrophosphoryl linkage. Able to catalyze 2 distinct epimerization reactions and can release both GDP-L-galactose and GDP-L-gulose from GDP-mannose. The protein is GDP-mannose 3,5-epimerase 1 (GME-1) of Oryza sativa subsp. japonica (Rice).